A 493-amino-acid chain; its full sequence is Trichothecene 8-O-acetyltransferase (493 aa).

Residues 180 to 191 (QDQNENEVQQPK) are compositionally biased toward polar residues. Residues 180-199 (QDQNENEVQQPKNLPDPDEP) form a disordered region.

Its pathway is sesquiterpene biosynthesis; trichothecene biosynthesis. Trichothecene 8-O-acetyltransferase; part of 2-gene cluster involved in trichothecene C-8 modification that mediates the biosynthesis of T2-toxin. The biosynthesis of trichothecenes begins with the cyclization of farnesyl diphosphate to trichodiene and is catalyzed by the trichodiene synthase TRI5. Trichodiene undergoes a series of oxygenations catalyzed by the cytochrome P450 monooxygenase TRI4. TRI4 controls the addition of four oxygens at C-2, C-3, C-11, and the C-12, C-13-epoxide to form the intermediate isotrichotriol. Isotrichotriol then undergoes a non-enzymatic isomerization and cyclization to form isotrichodermol. During this process, the oxygen at the C-2 position becomes the pyran ring oxygen and the hydroxyl group at C-11 is lost. More complex type A trichothecenes are built by modifying isotrichodermol through a series of paired hydroxylation and acetylation or acylation steps. Isotrichodermol is converted to isotrichodermin by the acetyltransferase TRI101. TRI101 encodes a C-3 transacetylase that acts as a self-protection or resistance factor during biosynthesis and that the presence of a free C-3 hydroxyl group is a key component of Fusarium trichothecene phytotoxicity. A second hydroxyl group is added to C-15 by the trichothecene C-15 hydroxylase TRI11, producing 15-decalonectrin, which is then acetylated by TRI3, producing calonectrin. A third hydroxyl group is added at C-4 by the cytochrome P450 monooxygenase TRI13, converting calonectrin to 3,15-diacetoxyspirpenol, which is subsequently acetylated bythe acetyltransferase TRI7. A fourth hydroxyl group is added to C-8 by the cytochrome P450 monooxygenase TRI1, followed by the addition of an isovaleryl moiety by TRI16. Finally, the acetyl group is removed from the C-3 position by the trichothecene C-3 esterase TRI8 to produce T-2 toxin. The polypeptide is Trichothecene 8-O-acetyltransferase (Fusarium sporotrichioides).